A 503-amino-acid polypeptide reads, in one-letter code: Cytochrome c lysine N-methyltransferase 1 (503 aa).

In terms of domain architecture, SET spans 52–276 (SKFELLRIPR…EEAQVFISYA (225 aa)). The interval 190-291 (NYEKLISTVY…VHFEQIYGFL (102 aa)) is SET-like.

The protein belongs to the class V-like SAM-binding methyltransferase superfamily.

The protein resides in the cytoplasm. It localises to the cytosol. The enzyme catalyses L-lysyl-[cytochrome c] + S-adenosyl-L-methionine = N(6)-methyl-L-lysyl-[cytochrome c] + S-adenosyl-L-homocysteine + H(+). Its function is as follows. Methyltransferase which mediates trimethylation of cytochrome c (CYC1). This Kluyveromyces lactis (strain ATCC 8585 / CBS 2359 / DSM 70799 / NBRC 1267 / NRRL Y-1140 / WM37) (Yeast) protein is Cytochrome c lysine N-methyltransferase 1 (CTM1).